The sequence spans 337 residues: GTPase Obg (337 aa).

The 159-residue stretch at 4 to 162 folds into the Obg domain; it reads SNFIDYVKVC…AWVILELKVL (159 aa). Residues 163–329 form the OBG-type G domain; it reads ADVGLVGFPN…LKDLLWTTMN (167 aa). GTP contacts are provided by residues 169 to 176, 194 to 198, 216 to 219, 283 to 286, and 310 to 312; these read GFPNAGKS, FTTLA, DIPG, SKSD, and SSY. Residues Ser-176 and Thr-196 each coordinate Mg(2+).

It belongs to the TRAFAC class OBG-HflX-like GTPase superfamily. OBG GTPase family. Monomer. Requires Mg(2+) as cofactor.

It localises to the cytoplasm. Functionally, an essential GTPase which binds GTP, GDP and possibly (p)ppGpp with moderate affinity, with high nucleotide exchange rates and a fairly low GTP hydrolysis rate. Plays a role in control of the cell cycle, stress response, ribosome biogenesis and in those bacteria that undergo differentiation, in morphogenesis control. The sequence is that of GTPase Obg from Cytophaga hutchinsonii (strain ATCC 33406 / DSM 1761 / CIP 103989 / NBRC 15051 / NCIMB 9469 / D465).